Reading from the N-terminus, the 218-residue chain is DNA replication complex GINS protein psf3 (218 aa).

Positions 147-163 are enriched in gly residues; the sequence is GGGSSYHGRDGGGAGGK. The segment at 147-182 is disordered; sequence GGGSSYHGRDGGGAGGKGKGKATKDDNASNLGVGGA.

The protein belongs to the GINS3/PSF3 family. In terms of assembly, component of the GINS complex which is a heterotetramer of div-26/sld5, drc-1/psf1, drc-2/psf2 and drc-3/psf3.

Its subcellular location is the nucleus. The GINS complex plays an essential role in the initiation of DNA replication. This chain is DNA replication complex GINS protein psf3 (drc-3), found in Neurospora crassa (strain ATCC 24698 / 74-OR23-1A / CBS 708.71 / DSM 1257 / FGSC 987).